The primary structure comprises 117 residues: DNA-directed RNA polymerase subunit omega (117 aa).

The protein belongs to the RNA polymerase subunit omega family. In terms of assembly, the RNAP catalytic core consists of 2 alpha, 1 beta, 1 beta' and 1 omega subunit. When a sigma factor is associated with the core the holoenzyme is formed, which can initiate transcription.

The enzyme catalyses RNA(n) + a ribonucleoside 5'-triphosphate = RNA(n+1) + diphosphate. Its function is as follows. Promotes RNA polymerase assembly. Latches the N- and C-terminal regions of the beta' subunit thereby facilitating its interaction with the beta and alpha subunits. The protein is DNA-directed RNA polymerase subunit omega of Ruegeria pomeroyi (strain ATCC 700808 / DSM 15171 / DSS-3) (Silicibacter pomeroyi).